The chain runs to 282 residues: Thiazole synthase (282 aa).

The active-site Schiff-base intermediate with DXP is the Lys113. 1-deoxy-D-xylulose 5-phosphate contacts are provided by residues Gly174, 201-202 (AG), and 223-224 (NT).

This sequence belongs to the ThiG family. In terms of assembly, homotetramer. Forms heterodimers with either ThiH or ThiS.

The protein resides in the cytoplasm. It catalyses the reaction [ThiS sulfur-carrier protein]-C-terminal-Gly-aminoethanethioate + 2-iminoacetate + 1-deoxy-D-xylulose 5-phosphate = [ThiS sulfur-carrier protein]-C-terminal Gly-Gly + 2-[(2R,5Z)-2-carboxy-4-methylthiazol-5(2H)-ylidene]ethyl phosphate + 2 H2O + H(+). The protein operates within cofactor biosynthesis; thiamine diphosphate biosynthesis. Functionally, catalyzes the rearrangement of 1-deoxy-D-xylulose 5-phosphate (DXP) to produce the thiazole phosphate moiety of thiamine. Sulfur is provided by the thiocarboxylate moiety of the carrier protein ThiS. In vitro, sulfur can be provided by H(2)S. The protein is Thiazole synthase of Cupriavidus metallidurans (strain ATCC 43123 / DSM 2839 / NBRC 102507 / CH34) (Ralstonia metallidurans).